Consider the following 193-residue polypeptide: dTTP/UTP pyrophosphatase (193 aa).

D75 acts as the Proton acceptor in catalysis.

The protein belongs to the Maf family. YhdE subfamily. A divalent metal cation is required as a cofactor.

Its subcellular location is the cytoplasm. It catalyses the reaction dTTP + H2O = dTMP + diphosphate + H(+). The catalysed reaction is UTP + H2O = UMP + diphosphate + H(+). Functionally, nucleoside triphosphate pyrophosphatase that hydrolyzes dTTP and UTP. May have a dual role in cell division arrest and in preventing the incorporation of modified nucleotides into cellular nucleic acids. In Chlorobium phaeovibrioides (strain DSM 265 / 1930) (Prosthecochloris vibrioformis (strain DSM 265)), this protein is dTTP/UTP pyrophosphatase.